The following is a 357-amino-acid chain: DENN domain-containing protein 10 (357 aa).

The uDENN domain occupies 1–140 (MAAAEVADTQ…TKGICQSEEN (140 aa)). The 135-residue stretch at 165-299 (QFGMETVILH…PEKSESHVIQ (135 aa)) folds into the cDENN domain. One can recognise a dDENN domain in the interval 301-357 (IALKTREIFTNLAPFSEVSADGEKRVLNLEALKQKRFPPATENFLYHLAAAEQMLKI).

This sequence belongs to the DENND10 family. Interacts with the coiled-coil heterodimer of CCDC22 and CCDC93; the interaction is direct. Interacts with RAB27A and RAB27B (GDP-bound forms preferentially).

Its subcellular location is the late endosome. In terms of biological role, guanine nucleotide exchange factor (GEF) regulating homeostasis of late endocytic pathway, including endosomal positioning, maturation and secretion, possibly through activating Rab proteins such as RAB27A and RAB27B. Promotes the exchange of GDP to GTP, converting inactive GDP-bound RAB27A and RAB27B into their active GTP-bound form. The protein is DENN domain-containing protein 10 of Homo sapiens (Human).